The following is a 196-amino-acid chain: Putative HTH-type transcriptional regulator in exeN 3'region (196 aa).

An HTH luxR-type domain is found at 120-185; that stretch reads ASVGGDRLTR…ELFNLFLNHL (66 aa). The segment at residues 144-163 is a DNA-binding region (H-T-H motif); that stretch reads TEAIAAALGIGNGTVKNHRK.

The polypeptide is Putative HTH-type transcriptional regulator in exeN 3'region (Aeromonas salmonicida).